A 176-amino-acid chain; its full sequence is Transcription termination/antitermination protein NusG (176 aa).

One can recognise a KOW domain in the interval 125 to 149 (GEVVRVVEGPFANFTATVEEYDVEH).

This sequence belongs to the NusG family.

Participates in transcription elongation, termination and antitermination. The polypeptide is Transcription termination/antitermination protein NusG (Helicobacter pylori (strain J99 / ATCC 700824) (Campylobacter pylori J99)).